We begin with the raw amino-acid sequence, 333 residues long: Adenosine deaminase (333 aa).

Residues H12 and H14 each coordinate Zn(2+). H14, D16, and G170 together coordinate substrate. H197 serves as a coordination point for Zn(2+). Residue E200 is the Proton donor of the active site. Residue D278 coordinates Zn(2+). A substrate-binding site is contributed by D279.

The protein belongs to the metallo-dependent hydrolases superfamily. Adenosine and AMP deaminases family. Adenosine deaminase subfamily. Zn(2+) is required as a cofactor.

The enzyme catalyses adenosine + H2O + H(+) = inosine + NH4(+). It carries out the reaction 2'-deoxyadenosine + H2O + H(+) = 2'-deoxyinosine + NH4(+). Its function is as follows. Catalyzes the hydrolytic deamination of adenosine and 2-deoxyadenosine. The sequence is that of Adenosine deaminase from Klebsiella pneumoniae (strain 342).